The sequence spans 178 residues: MPRVELEIPEDVDAEQDHLDITVEGDNGSVTRRLWYPDIDVSVDGDTVVIESDEDNAKTMSTIGTFQSHIENMFHGVTEGWEYGMEVFYSHFPMQVNVEGDEVVIENFLGEKAPRRTTIHGDTDVEIDGEELTVSGPDIEAVGQTAADIEQLTRINDKDVRVFQDGVYITRKPNRGDA.

This sequence belongs to the universal ribosomal protein uL6 family. As to quaternary structure, part of the 50S ribosomal subunit. Interacts weakly with protein L13.

Functionally, this protein binds to the 23S rRNA, and is important in its secondary structure. It is located near the subunit interface in the base of the L7/L12 stalk, and near the tRNA binding site of the peptidyltransferase center. This Haloarcula marismortui (strain ATCC 43049 / DSM 3752 / JCM 8966 / VKM B-1809) (Halobacterium marismortui) protein is Large ribosomal subunit protein uL6.